Reading from the N-terminus, the 560-residue chain is Clathrin interactor EPSIN 1 (560 aa).

The 133-residue stretch at 20–152 (LKVLKVPEME…NNKEKISEIR (133 aa)) folds into the ENTH domain. The tract at residues 190-288 (NFDSYKDRDS…KPSTGSANQV (99 aa)) is disordered. Positions 193 to 220 (SYKDRDSREDKNDYESFQKSRRGVKTEE) are enriched in basic and acidic residues. Residues 221 to 233 (QSYTSKKSFSRYG) show a composition bias toward polar residues. The segment covering 234-251 (STDHDNLSSGKKSPDSAK) has biased composition (basic and acidic residues). The span at 274 to 287 (GTSSNKPSTGSANQ) shows a compositional bias: polar residues. The Clathrin binding signature appears at 296 to 300 (IGDFL). The short motif at 320–322 (DLF) is the ALPHA-ADR binding element. Polar residues predominate over residues 414 to 439 (SHSASVSTGPQAPSVHGSATNTTSPL). Disordered stretches follow at residues 414 to 453 (SHSASVSTGPQAPSVHGSATNTTSPLSFADSKPQHLQKKD) and 517 to 560 (LGKT…GFKQ). Residues 526–536 (QQQQQQQQQQQ) show a composition bias toward low complexity. A compositionally biased stretch (polar residues) spans 544–554 (FFSSLSNQRYQ).

It belongs to the epsin family. In terms of assembly, interacts with clathrin, VTI11, GAMMA-ADR and VSR1. Binds to the deubiquitinating enzyme AMSH3. Mostly expressed in cotyledons and flowers, and, to a lower extent, in roots, leaves and siliques (at protein level).

The protein resides in the golgi apparatus. The protein localises to the prevacuolar compartment. Its subcellular location is the cytoplasm. It localises to the cytoplasmic vesicle. It is found in the clathrin-coated vesicle. The protein resides in the cytoskeleton. Functionally, may have a role in transport via clathrin-coated vesicles from the trans-Golgi network to endosomes. Stimulates clathrin assembly. Does not seem to bind to phospholipids. Plays an important role in the vacuolar trafficking of soluble cargo proteins at the trans-Golgi network. This chain is Clathrin interactor EPSIN 1 (EPSIN1), found in Arabidopsis thaliana (Mouse-ear cress).